We begin with the raw amino-acid sequence, 43 residues long: Protein PsbN (43 aa).

The chain crosses the membrane as a helical span at residues 7–27 (FVVGILVALVLITAFAVYTAF).

The protein belongs to the PsbN family.

It localises to the cell inner membrane. In terms of biological role, may play a role in photosystem I and II biogenesis. The polypeptide is Protein PsbN (Gloeobacter violaceus (strain ATCC 29082 / PCC 7421)).